The sequence spans 332 residues: Serpentine receptor class gamma-3 (332 aa).

Helical transmembrane passes span 23–43 (FAYLFTAICINYRILYVIWVS), 72–92 (LIFTRSFLYFPQLCVSFSEIV), 101–121 (IYYCLLSYLIAIKPVIHIFIA), 144–164 (IMLIVIFLAPFLVIWNVLISD), 184–204 (WASLSLMQFTLIILTVLITMV), 231–251 (AALISVGFLLEAITQSFFAFF), and 263–283 (YLRFATMDILFVGSPLVLLLV).

Belongs to the nematode receptor-like protein srg family.

The protein localises to the membrane. This Caenorhabditis elegans protein is Serpentine receptor class gamma-3 (srg-3).